Here is a 199-residue protein sequence, read N- to C-terminus: UPF0329 protein ECU01_0120/ECU01_1490/ECU08_0050 (199 aa).

Belongs to the UPF0329 family.

The sequence is that of UPF0329 protein ECU01_0120/ECU01_1490/ECU08_0050 from Encephalitozoon cuniculi (strain GB-M1) (Microsporidian parasite).